Consider the following 280-residue polypeptide: Large ribosomal subunit protein uL2 (280 aa).

2 disordered regions span residues 1–47 and 224–280; these read MAIR…NVHG and VVMN…SKKR. A compositionally biased stretch (basic and acidic residues) spans 23-33; the sequence is EITRSTPEKSL. Basic residues predominate over residues 37–47; sequence LPKKGGRNVHG. Polar residues predominate over residues 258-268; that stretch reads RNPNRYSNNMI. The span at 270–280 shows a compositional bias: basic residues; that stretch reads QRRRTNKSKKR.

The protein belongs to the universal ribosomal protein uL2 family. In terms of assembly, part of the 50S ribosomal subunit. Forms a bridge to the 30S subunit in the 70S ribosome.

One of the primary rRNA binding proteins. Required for association of the 30S and 50S subunits to form the 70S ribosome, for tRNA binding and peptide bond formation. It has been suggested to have peptidyltransferase activity; this is somewhat controversial. Makes several contacts with the 16S rRNA in the 70S ribosome. This chain is Large ribosomal subunit protein uL2, found in Corynebacterium diphtheriae (strain ATCC 700971 / NCTC 13129 / Biotype gravis).